The primary structure comprises 415 residues: Acetate kinase (415 aa).

Mg(2+) is bound at residue asparagine 8. Residue lysine 15 coordinates ATP. Arginine 106 serves as a coordination point for substrate. Aspartate 163 serves as the catalytic Proton donor/acceptor. ATP-binding positions include 222-226 (HLGNG), 296-298 (DLR), and 344-348 (GIGEN). Residue glutamate 397 participates in Mg(2+) binding.

This sequence belongs to the acetokinase family. In terms of assembly, homodimer. Requires Mg(2+) as cofactor. The cofactor is Mn(2+).

It is found in the cytoplasm. It catalyses the reaction acetate + ATP = acetyl phosphate + ADP. It functions in the pathway metabolic intermediate biosynthesis; acetyl-CoA biosynthesis; acetyl-CoA from acetate: step 1/2. Functionally, catalyzes the formation of acetyl phosphate from acetate and ATP. Can also catalyze the reverse reaction. This chain is Acetate kinase, found in Thermosynechococcus vestitus (strain NIES-2133 / IAM M-273 / BP-1).